Here is a 132-residue protein sequence, read N- to C-terminus: Large ribosomal subunit protein bL17 (132 aa).

Belongs to the bacterial ribosomal protein bL17 family. As to quaternary structure, part of the 50S ribosomal subunit. Contacts protein L32.

The protein is Large ribosomal subunit protein bL17 of Shewanella sediminis (strain HAW-EB3).